The primary structure comprises 188 residues: Methylamine dehydrogenase light chain (188 aa).

Positions 1–57 (MLGNFRFDDMVEKLSRRVAGRTSRRGAIGRLGTVLAGAALVPLLPVDRRGRVSRANA) form a signal peptide, tat-type signal. 6 cysteine pairs are disulfide-bonded: Cys-80–Cys-145, Cys-86–Cys-118, Cys-93–Cys-178, Cys-95–Cys-143, Cys-103–Cys-134, and Cys-135–Cys-166. At Trp-114 the chain carries Tryptophylquinone. The segment at residues 114 to 165 (WVASCYNPTDGQSYLIAYRDCCGYNVSGRCPCLNTEGELPVYRPEFANDIIW) is a cross-link (tryptophan tryptophylquinone (Trp-Trp)).

Belongs to the aromatic amine dehydrogenase light chain family. In terms of assembly, heterotetramer of two light and two heavy chains. The cofactor is tryptophan tryptophylquinone residue. Post-translationally, predicted to be exported by the Tat system. The position of the signal peptide cleavage has been experimentally proven. Tryptophan tryptophylquinone (TTQ) is formed by oxidation of the indole ring of a tryptophan to form tryptophylquinone followed by covalent cross-linking with another tryptophan residue.

It is found in the periplasm. It catalyses the reaction 2 oxidized [amicyanin] + methylamine + H2O = 2 reduced [amicyanin] + formaldehyde + NH4(+) + 2 H(+). The protein operates within one-carbon metabolism; methylamine degradation; formaldehyde from methylamine: step 1/1. Its function is as follows. Methylamine dehydrogenase carries out the oxidation of methylamine. Electrons are passed from methylamine dehydrogenase to amicyanin. The protein is Methylamine dehydrogenase light chain (mauA) of Paracoccus versutus (Thiobacillus versutus).